We begin with the raw amino-acid sequence, 320 residues long: Ferrochelatase (320 aa).

His194 and Glu275 together coordinate Fe cation.

Belongs to the ferrochelatase family.

It localises to the cytoplasm. The enzyme catalyses heme b + 2 H(+) = protoporphyrin IX + Fe(2+). The protein operates within porphyrin-containing compound metabolism; protoheme biosynthesis; protoheme from protoporphyrin-IX: step 1/1. In terms of biological role, catalyzes the ferrous insertion into protoporphyrin IX. This Yersinia pestis bv. Antiqua (strain Antiqua) protein is Ferrochelatase.